Consider the following 488-residue polypeptide: Bifunctional pantoate ligase/cytidylate kinase (488 aa).

Position 1–8 (1–8) interacts with ATP; the sequence is MGALHRAH. The interval 1 to 251 is pantoate--beta-alanine ligase; sequence MGALHRAHGQ…CGETRLIDHT (251 aa). Residue His-8 is the Proton donor of the active site. Gln-36 contacts (R)-pantoate. Residue Gln-36 participates in beta-alanine binding. 125-128 contacts ATP; that stretch reads GEKD. Residue Gln-131 coordinates (R)-pantoate. ATP contacts are provided by residues Val-154 and 162-165; that span reads CSSR. A cytidylate kinase region spans residues 252–488; that stretch reads FLMSRQPIVA…PEEVWPTPGS (237 aa).

It in the N-terminal section; belongs to the pantothenate synthetase family. The protein in the C-terminal section; belongs to the cytidylate kinase family. Type 1 subfamily.

It is found in the cytoplasm. It catalyses the reaction (R)-pantoate + beta-alanine + ATP = (R)-pantothenate + AMP + diphosphate + H(+). The enzyme catalyses CMP + ATP = CDP + ADP. The catalysed reaction is dCMP + ATP = dCDP + ADP. It participates in cofactor biosynthesis; (R)-pantothenate biosynthesis; (R)-pantothenate from (R)-pantoate and beta-alanine: step 1/1. Functionally, catalyzes the condensation of pantoate with beta-alanine in an ATP-dependent reaction via a pantoyl-adenylate intermediate. Catalyzes the transfer of a phosphate group from ATP to either CMP or dCMP to form CDP or dCDP and ADP, respectively. This is Bifunctional pantoate ligase/cytidylate kinase from Prochlorococcus marinus (strain MIT 9303).